Reading from the N-terminus, the 419-residue chain is 5-methylthioadenosine/S-adenosylhomocysteine deaminase (419 aa).

His58 and His60 together coordinate Zn(2+). The substrate site is built by Glu87 and His179. His206 lines the Zn(2+) pocket. Substrate-binding residues include Glu209 and Asp294. Asp294 lines the Zn(2+) pocket.

The protein belongs to the metallo-dependent hydrolases superfamily. MTA/SAH deaminase family. It depends on Zn(2+) as a cofactor.

The enzyme catalyses S-adenosyl-L-homocysteine + H2O + H(+) = S-inosyl-L-homocysteine + NH4(+). It catalyses the reaction S-methyl-5'-thioadenosine + H2O + H(+) = S-methyl-5'-thioinosine + NH4(+). Catalyzes the deamination of 5-methylthioadenosine and S-adenosyl-L-homocysteine into 5-methylthioinosine and S-inosyl-L-homocysteine, respectively. Is also able to deaminate adenosine. The protein is 5-methylthioadenosine/S-adenosylhomocysteine deaminase of Pyrococcus furiosus (strain ATCC 43587 / DSM 3638 / JCM 8422 / Vc1).